We begin with the raw amino-acid sequence, 179 residues long: MIIVTGMPGAGKDEFVKVARSLGFMDLHMGNTVREYASRNGIPDDDKEIGNFAASERKKFGMDIWARRTAEKIESDELTVIDGVRNKEEMDYFSKFSKSIYVVAIFANRKTRLERILKRDRPDDIRSMEGLIERDNRELSWGIGNVIALADYMIVNDESLEIFYERSRKLLFDHFLIRA.

Residue 6 to 13 coordinates ATP; sequence GMPGAGKD.

The protein belongs to the UPF0200 family.

This chain is UPF0200 protein TV0279, found in Thermoplasma volcanium (strain ATCC 51530 / DSM 4299 / JCM 9571 / NBRC 15438 / GSS1).